The primary structure comprises 594 residues: UvrABC system protein C (594 aa).

The GIY-YIG domain occupies 13–99; the sequence is HSSGVYQYFD…IKQLKPKYNI (87 aa). Residues 205-240 enclose the UVR domain; sequence DKLIKELELKMERLSNNLRFEEALIYRDRIAKIQKI.

It belongs to the UvrC family. Interacts with UvrB in an incision complex.

Its subcellular location is the cytoplasm. Its function is as follows. The UvrABC repair system catalyzes the recognition and processing of DNA lesions. UvrC both incises the 5' and 3' sides of the lesion. The N-terminal half is responsible for the 3' incision and the C-terminal half is responsible for the 5' incision. The polypeptide is UvrABC system protein C (Helicobacter pylori (strain Shi470)).